The following is a 522-amino-acid chain: Target of rapamycin complex 2 subunit MAPKAP1 (522 aa).

Alanine 2 carries the N-acetylalanine modification. Positions alanine 2 to histidine 184 are interaction with MAP3K2. The segment at alanine 2–lysine 267 is interaction with NBN. Position 86 is a phosphothreonine (threonine 86). 4 positions are modified to phosphoserine: serine 128, serine 186, serine 315, and serine 356. In terms of domain architecture, CRIM spans glutamine 139–lysine 267. Residues leucine 279–arginine 353 form an SIN1-type RBD region. Positions histidine 382 to glutamate 487 constitute an SIN1-type PH domain. Residue arginine 393 participates in a 1,2-diacyl-sn-glycero-3-phospho-(1D-myo-inositol-3,4,5-trisphosphate) binding. Phosphothreonine is present on threonine 398. Residues lysine 428 and lysine 464 each contribute to the a 1,2-diacyl-sn-glycero-3-phospho-(1D-myo-inositol-3,4,5-trisphosphate) site. An interaction with ATF2 region spans residues phenylalanine 468–glutamine 522. Phosphoserine is present on serine 510.

It belongs to the SIN1 family. As to quaternary structure, component of the mechanistic target of rapamycin complex 2 (mTORC2), consisting in two heterotretramers composed of MTOR, MLST8, RICTOR and MAPKAP1/SIN1. The mTORC2 core complex associates with PRR5/PROTOR1 and/or PRR5L/PROTOR2. Contrary to mTORC1, mTORC2 does not bind to and is not sensitive to FKBP12-rapamycin. Interacts with MAP3K2. Interacts with ATF2. Interacts with MAPK8. Interacts with GTP-bound HRAS and KRAS; inhibiting their activity. Interacts with IFNAR2. Post-translationally, phosphorylation at Ser-128 by PKC promotes relocalization to the perinuclear region, where the mTORC2 complex specifically mediates phosphorylation of SGK1. Phosphorylated at Thr-86 by AKT1 or RPS6KB1 in the presence of growth factors; the effect of this phosphorylation is however unclear. According to two studies, phosphorylation at Thr-86 by AKT1 is part of a positive feedback loop that increases mTORC2 activation. According to another study, phosphorylation at Thr-86 and Thr-398 by RPS6KB1 promotes dissociation from the mTORC2 complex, leading to inhibit mTORC2 signaling.

It localises to the cell membrane. Its subcellular location is the endoplasmic reticulum membrane. The protein localises to the early endosome membrane. The protein resides in the late endosome membrane. It is found in the lysosome membrane. It localises to the golgi apparatus membrane. Its subcellular location is the mitochondrion outer membrane. The protein localises to the cytoplasm. The protein resides in the perinuclear region. It is found in the nucleus. Phosphatidylinositol 3,4,5-trisphosphate (PI(3,4,5)P3) promotes MTOR activation by relieving MAPKAP1/SIN1-mediated inhibition of MTOR that takes place in absence of PI(3,4,5)P3. Component of the mechanistic target of rapamycin complex 2 (mTORC2), which transduces signals from growth factors to pathways involved in proliferation, cytoskeletal organization, lipogenesis and anabolic output. In response to growth factors, mTORC2 phosphorylates and activates AGC protein kinase family members, including AKT (AKT1, AKT2 and AKT3), PKC (PRKCA, PRKCB and PRKCE) and SGK1. In contrast to mTORC1, mTORC2 is nutrient-insensitive. Within the mTORC2 complex, MAPKAP1/SIN1 acts as a substrate adapter which recognizes and binds AGC protein kinase family members for phosphorylation by MTOR. mTORC2 plays a critical role in AKT1 activation by mediating phosphorylation of different sites depending on the context, such as 'Thr-450', 'Ser-473', 'Ser-477' or 'Thr-479', facilitating the phosphorylation of the activation loop of AKT1 on 'Thr-308' by PDPK1/PDK1 which is a prerequisite for full activation. mTORC2 catalyzes the phosphorylation of SGK1 at 'Ser-422' and of PRKCA on 'Ser-657'. The mTORC2 complex also phosphorylates various proteins involved in insulin signaling, such as FBXW8 and IGF2BP1. mTORC2 acts upstream of Rho GTPases to regulate the actin cytoskeleton, probably by activating one or more Rho-type guanine nucleotide exchange factors. mTORC2 promotes the serum-induced formation of stress-fibers or F-actin. MAPKAP1 inhibits MAP3K2 by preventing its dimerization and autophosphorylation. Inhibits HRAS and KRAS independently of mTORC2 complex. Enhances osmotic stress-induced phosphorylation of ATF2 and ATF2-mediated transcription. Involved in ciliogenesis, regulates cilia length through its interaction with CCDC28B independently of mTORC2 complex. This Pongo abelii (Sumatran orangutan) protein is Target of rapamycin complex 2 subunit MAPKAP1 (MAPKAP1).